The primary structure comprises 633 residues: Leucine-rich repeat and IQ domain-containing protein 3 (633 aa).

LRR repeat units lie at residues 51-72, 73-94, and 98-119; these read SLRV…QGCK, KLIK…TFWN, and NLKL…CVLS. An LRRCT domain is found at 132–179; that stretch reads CPVSLKKGYRHVLVNSIWPLKALDHHVISDEEIIQNWHLPERFKTFSQ. Residues 215–244 form the IQ domain; the sequence is HNSPVLIIQRWIRGFIVRKHLSPYFTRKRH. A disordered region spans residues 322-343; sequence NSKQPRHHIQKGQNEMKSDSED. Residues 556–616 are a coiled coil; the sequence is EKREKRKYKQ…AKVEFINTYY (61 aa).

This is Leucine-rich repeat and IQ domain-containing protein 3 (Lrriq3) from Rattus norvegicus (Rat).